The chain runs to 157 residues: S-ribosylhomocysteine lyase 2 (157 aa).

3 residues coordinate Fe cation: histidine 54, histidine 58, and cysteine 124.

This sequence belongs to the LuxS family. Homodimer. Requires Fe cation as cofactor.

The enzyme catalyses S-(5-deoxy-D-ribos-5-yl)-L-homocysteine = (S)-4,5-dihydroxypentane-2,3-dione + L-homocysteine. Involved in the synthesis of autoinducer 2 (AI-2) which is secreted by bacteria and is used to communicate both the cell density and the metabolic potential of the environment. The regulation of gene expression in response to changes in cell density is called quorum sensing. Catalyzes the transformation of S-ribosylhomocysteine (RHC) to homocysteine (HC) and 4,5-dihydroxy-2,3-pentadione (DPD). This chain is S-ribosylhomocysteine lyase 2, found in Lactobacillus delbrueckii subsp. bulgaricus (strain ATCC BAA-365 / Lb-18).